The following is a 76-amino-acid chain: Esculentin-2SN1 (76 aa).

The signal sequence occupies residues 1–22 (MFTMKKSLLFLFFLGTISLSLC). Residues 23–37 (EQERGADEDDGGEEV) constitute a propeptide that is removed on maturation. Cysteines 70 and 76 form a disulfide.

This sequence belongs to the frog skin active peptide (FSAP) family. Esculentin subfamily. Expressed by the skin glands.

Its subcellular location is the secreted. Antimicrobial peptide. Active against some Gram-negative and a variety of Gram-positive bacterial strains. Not active against fungi. Shows very weak hemolytic activity against human erythrocytes. This Sylvirana spinulosa (Fine-spined frog) protein is Esculentin-2SN1.